An 87-amino-acid polypeptide reads, in one-letter code: Apolipoprotein C-I (87 aa).

The first 26 residues, 1–26 (MRLILSLPVLAVVLAMVLEGPAPAQA), serve as a signal peptide directing secretion.

The protein belongs to the apolipoprotein C1 family.

The protein resides in the secreted. Inhibitor of lipoprotein binding to the low density lipoprotein (LDL) receptor, LDL receptor-related protein, and very low density lipoprotein (VLDL) receptor. Associates with high density lipoproteins (HDL) and the triacylglycerol-rich lipoproteins in the plasma and makes up about 10% of the protein of the VLDL and 2% of that of HDL. Appears to interfere directly with fatty acid uptake and is also the major plasma inhibitor of cholesteryl ester transfer protein (CETP). Binds free fatty acids and reduces their intracellular esterification. Modulates the interaction of APOE with beta-migrating VLDL and inhibits binding of beta-VLDL to the LDL receptor-related protein. The sequence is that of Apolipoprotein C-I (APOC1) from Pteropus vampyrus (Large flying fox).